Reading from the N-terminus, the 206-residue chain is ATP synthase subunit b (206 aa).

The chain crosses the membrane as a helical span at residues 10–30; it reads LLKPFVSTAAICLLVAGTVVL.

The protein belongs to the ATPase B chain family. F-type ATPases have 2 components, F(1) - the catalytic core - and F(0) - the membrane proton channel. F(1) has five subunits: alpha(3), beta(3), gamma(1), delta(1), epsilon(1). F(0) has three main subunits: a(1), b(2) and c(10-14). The alpha and beta chains form an alternating ring which encloses part of the gamma chain. F(1) is attached to F(0) by a central stalk formed by the gamma and epsilon chains, while a peripheral stalk is formed by the delta and b chains.

Its subcellular location is the cell inner membrane. F(1)F(0) ATP synthase produces ATP from ADP in the presence of a proton or sodium gradient. F-type ATPases consist of two structural domains, F(1) containing the extramembraneous catalytic core and F(0) containing the membrane proton channel, linked together by a central stalk and a peripheral stalk. During catalysis, ATP synthesis in the catalytic domain of F(1) is coupled via a rotary mechanism of the central stalk subunits to proton translocation. Its function is as follows. Component of the F(0) channel, it forms part of the peripheral stalk, linking F(1) to F(0). The sequence is that of ATP synthase subunit b from Geobacter sulfurreducens (strain ATCC 51573 / DSM 12127 / PCA).